Consider the following 117-residue polypeptide: Immunoglobulin heavy variable 1-46 (117 aa).

The N-terminal stretch at 1–19 (MDWTWRVFCLLAVAPGAHS) is a signal peptide. A framework-1 region spans residues 20–44 (QVQLVQSGAEVKKPGASVKVSCKAS). Positions 20 to 117 (QVQLVQSGAE…EDTAVYYCAR (98 aa)) constitute an Ig-like domain. C41 and C115 are oxidised to a cystine. Residues 45–52 (GYTFTSYY) are complementarity-determining-1. Residues 53-69 (MHWVRQAPGQGLEWMGI) form a framework-2 region. Residues 70-77 (INPSGGST) form a complementarity-determining-2 region. The tract at residues 78-115 (SYAQKFQGRVTMTRDTSTSTVYMELSSLRSEDTAVYYC) is framework-3. Positions 116–117 (AR) are complementarity-determining-3.

As to quaternary structure, immunoglobulins are composed of two identical heavy chains and two identical light chains; disulfide-linked.

The protein localises to the secreted. The protein resides in the cell membrane. In terms of biological role, v region of the variable domain of immunoglobulin heavy chains that participates in the antigen recognition. Immunoglobulins, also known as antibodies, are membrane-bound or secreted glycoproteins produced by B lymphocytes. In the recognition phase of humoral immunity, the membrane-bound immunoglobulins serve as receptors which, upon binding of a specific antigen, trigger the clonal expansion and differentiation of B lymphocytes into immunoglobulins-secreting plasma cells. Secreted immunoglobulins mediate the effector phase of humoral immunity, which results in the elimination of bound antigens. The antigen binding site is formed by the variable domain of one heavy chain, together with that of its associated light chain. Thus, each immunoglobulin has two antigen binding sites with remarkable affinity for a particular antigen. The variable domains are assembled by a process called V-(D)-J rearrangement and can then be subjected to somatic hypermutations which, after exposure to antigen and selection, allow affinity maturation for a particular antigen. This is Immunoglobulin heavy variable 1-46 from Homo sapiens (Human).